The sequence spans 312 residues: Formimidoylglutamase (312 aa).

Mn(2+)-binding residues include H128, D153, H155, D157, D240, and D242.

Belongs to the arginase family. Mn(2+) serves as cofactor.

The catalysed reaction is N-formimidoyl-L-glutamate + H2O = formamide + L-glutamate. Its pathway is amino-acid degradation; L-histidine degradation into L-glutamate; L-glutamate from N-formimidoyl-L-glutamate (hydrolase route): step 1/1. Catalyzes the conversion of N-formimidoyl-L-glutamate to L-glutamate and formamide. The protein is Formimidoylglutamase of Enterobacter sp. (strain 638).